The primary structure comprises 228 residues: Carboxylesterase SOBER1 (228 aa).

Catalysis depends on charge relay system residues Ser106, Asp160, and His192.

The protein belongs to the AB hydrolase superfamily. AB hydrolase 2 family.

In terms of biological role, possesses carboxylesterase activity in vitro with a preference for short acyl chain substrates. Functions as a negative regulator of the hypersensitive response (HR) triggered by the bacterial type III effector protein AvrBsT. Possesses phospholipase A2 (PLA2) activity and hydrolyzes phosphatidylcholine (PC), a lipid that is hydrolyzed by phospholipase D (PLD) to produce phosphatidic acid (PA). Required to suppress AvrBsT-dependent HR and PLD-dependent production of PA in response to AvrBsT elicitation. This Arabidopsis thaliana (Mouse-ear cress) protein is Carboxylesterase SOBER1.